The primary structure comprises 114 residues: uncharacterized protein (114 aa).

The interval 1–114 is disordered; it reads MSTAASSRMR…HASQSPDTAY (114 aa). The segment covering 32 to 43 has biased composition (low complexity); the sequence is CRRVPSRPCRPV.

This is an uncharacterized protein from Human adenovirus B serotype 7 (HAdV-7).